We begin with the raw amino-acid sequence, 382 residues long: Dual-specificity RNA methyltransferase RlmN (382 aa).

Glu-96 (proton acceptor) is an active-site residue. One can recognise a Radical SAM core domain in the interval 102 to 342; sequence QGKRGTLCVS…VRTTRGEDID (241 aa). A disulfide bridge links Cys-109 with Cys-345. Cys-116, Cys-120, and Cys-123 together coordinate [4Fe-4S] cluster. S-adenosyl-L-methionine contacts are provided by residues 170–171, Ser-202, 224–226, and Asn-302; these read GE and SLH. The active-site S-methylcysteine intermediate is the Cys-345.

It belongs to the radical SAM superfamily. RlmN family. It depends on [4Fe-4S] cluster as a cofactor.

It is found in the cytoplasm. It catalyses the reaction adenosine(2503) in 23S rRNA + 2 reduced [2Fe-2S]-[ferredoxin] + 2 S-adenosyl-L-methionine = 2-methyladenosine(2503) in 23S rRNA + 5'-deoxyadenosine + L-methionine + 2 oxidized [2Fe-2S]-[ferredoxin] + S-adenosyl-L-homocysteine. The catalysed reaction is adenosine(37) in tRNA + 2 reduced [2Fe-2S]-[ferredoxin] + 2 S-adenosyl-L-methionine = 2-methyladenosine(37) in tRNA + 5'-deoxyadenosine + L-methionine + 2 oxidized [2Fe-2S]-[ferredoxin] + S-adenosyl-L-homocysteine. Specifically methylates position 2 of adenine 2503 in 23S rRNA and position 2 of adenine 37 in tRNAs. m2A2503 modification seems to play a crucial role in the proofreading step occurring at the peptidyl transferase center and thus would serve to optimize ribosomal fidelity. The sequence is that of Dual-specificity RNA methyltransferase RlmN from Pseudomonas fluorescens (strain Pf0-1).